A 132-amino-acid chain; its full sequence is Small ribosomal subunit protein uS8 (132 aa).

Belongs to the universal ribosomal protein uS8 family. Part of the 30S ribosomal subunit. Contacts proteins S5 and S12.

One of the primary rRNA binding proteins, it binds directly to 16S rRNA central domain where it helps coordinate assembly of the platform of the 30S subunit. This Francisella tularensis subsp. novicida (strain U112) protein is Small ribosomal subunit protein uS8.